Here is a 103-residue protein sequence, read N- to C-terminus: MATLKTTIFIIFILYISCTMFVNIFRVQADASCLTTKECVVRCSDEDAQCIHGECHCPHLKVDIEPTKAIRCKTDLDCPDPHQCPKYDYYACLNNGECTCISV.

A signal peptide spans 1 to 29 (MATLKTTIFIIFILYISCTMFVNIFRVQA). 6 cysteine pairs are disulfide-bonded: Cys33–Cys50, Cys39–Cys55, Cys43–Cys57, Cys72–Cys92, Cys78–Cys98, and Cys84–Cys100.

The protein belongs to the DEFL family.

It is found in the secreted. This Arabidopsis thaliana (Mouse-ear cress) protein is Defensin-like protein 289.